Here is an 890-residue protein sequence, read N- to C-terminus: UPF0182 protein SYNW1212 (890 aa).

Helical transmembrane passes span 21 to 41 (WLLQLASAVVALLPIGLAIRW), 64 to 84 (LTLLLAIALQLVSLAVINGLI), 98 to 118 (WQVSIHQSQLPVLTLISLVAV), 134 to 154 (AVVLIAARAWGVWALAWSIPL), 173 to 193 (FAALQLLIALLSSGALFCLGN), 219 to 239 (RLLMLMAALVLVLLAGQCWLS), 268 to 288 (LLTVELLLLALAVMLPSSLLL), and 295 to 315 (VLAVTLALGFSLTPLSRWLIL).

The protein belongs to the UPF0182 family.

The protein localises to the cell membrane. The polypeptide is UPF0182 protein SYNW1212 (Parasynechococcus marenigrum (strain WH8102)).